The primary structure comprises 136 residues: Peptide methionine sulfoxide reductase MsrB (136 aa).

The MsrB domain maps to 9–136; the sequence is DAEWKALLAE…NSASLDFKPK (128 aa). The Zn(2+) site is built by cysteine 53, cysteine 56, cysteine 102, and cysteine 105. The active-site Nucleophile is the cysteine 125.

This sequence belongs to the MsrB Met sulfoxide reductase family. The cofactor is Zn(2+).

It carries out the reaction L-methionyl-[protein] + [thioredoxin]-disulfide + H2O = L-methionyl-(R)-S-oxide-[protein] + [thioredoxin]-dithiol. This is Peptide methionine sulfoxide reductase MsrB from Polaromonas sp. (strain JS666 / ATCC BAA-500).